Consider the following 126-residue polypeptide: Large ribosomal subunit protein mL55 (126 aa).

Residues 1–34 constitute a mitochondrion transit peptide; sequence MSAKGSLLRLLWQCGMTRAAPESCRYLYTSSWRA. Serine 86 is modified (phosphoserine).

The protein belongs to the mitochondrion-specific ribosomal protein mL55 family. As to quaternary structure, component of the mitochondrial ribosome large subunit (39S) which comprises a 16S rRNA and about 50 distinct proteins.

The protein resides in the mitochondrion. This is Large ribosomal subunit protein mL55 (MRPL55) from Bos taurus (Bovine).